A 162-amino-acid chain; its full sequence is MIQRVYVALGSNLAEPREQIQAALDAFERLPETRLVAVSPLYISDPLGPADQPRFVNGVAALDTNLAPLDLLDALQAIELEQGRVRDLRWGPRTLDLDILLFGEQLLDLPRLKVPHYHMQARAFVLYPLADLAPDLRLPDGRHLPELLAACPFEGIERLPGA.

It belongs to the HPPK family.

It catalyses the reaction 6-hydroxymethyl-7,8-dihydropterin + ATP = (7,8-dihydropterin-6-yl)methyl diphosphate + AMP + H(+). It participates in cofactor biosynthesis; tetrahydrofolate biosynthesis; 2-amino-4-hydroxy-6-hydroxymethyl-7,8-dihydropteridine diphosphate from 7,8-dihydroneopterin triphosphate: step 4/4. Its function is as follows. Catalyzes the transfer of pyrophosphate from adenosine triphosphate (ATP) to 6-hydroxymethyl-7,8-dihydropterin, an enzymatic step in folate biosynthesis pathway. This chain is 2-amino-4-hydroxy-6-hydroxymethyldihydropteridine pyrophosphokinase (folK), found in Pseudomonas aeruginosa (strain ATCC 15692 / DSM 22644 / CIP 104116 / JCM 14847 / LMG 12228 / 1C / PRS 101 / PAO1).